Here is a 391-residue protein sequence, read N- to C-terminus: 1-deoxy-D-xylulose 5-phosphate reductoisomerase (391 aa).

Residues T10, G11, S12, I13, N38, and N122 each coordinate NADPH. 1-deoxy-D-xylulose 5-phosphate is bound at residue K123. NADPH is bound at residue E124. D148 provides a ligand contact to Mn(2+). S149, E150, S173, and H196 together coordinate 1-deoxy-D-xylulose 5-phosphate. E150 serves as a coordination point for Mn(2+). G202 is a binding site for NADPH. 1-deoxy-D-xylulose 5-phosphate is bound by residues S209, N214, K215, and E218. E218 serves as a coordination point for Mn(2+).

Belongs to the DXR family. Mg(2+) is required as a cofactor. It depends on Mn(2+) as a cofactor.

The catalysed reaction is 2-C-methyl-D-erythritol 4-phosphate + NADP(+) = 1-deoxy-D-xylulose 5-phosphate + NADPH + H(+). It participates in isoprenoid biosynthesis; isopentenyl diphosphate biosynthesis via DXP pathway; isopentenyl diphosphate from 1-deoxy-D-xylulose 5-phosphate: step 1/6. Functionally, catalyzes the NADPH-dependent rearrangement and reduction of 1-deoxy-D-xylulose-5-phosphate (DXP) to 2-C-methyl-D-erythritol 4-phosphate (MEP). The sequence is that of 1-deoxy-D-xylulose 5-phosphate reductoisomerase from Wolbachia pipientis subsp. Culex pipiens (strain wPip).